Here is a 140-residue protein sequence, read N- to C-terminus: uncharacterized protein (140 aa).

14 tandem repeats follow at residues 1 to 10 (MFARLCPVSE), 11 to 20 (TFGRLCPVSE), 21 to 30 (TFARLCPVSE), 31 to 40 (TFARLCPVSE), 41 to 50 (TFARLCPVSE), 51 to 60 (TFGRLCPVSE), 61 to 70 (MFGRLSPVSE), 71 to 80 (TFGRLCPVSE), 81 to 90 (TFGRLCPVSE), 91 to 100 (MFARLCPVSE), 101 to 110 (TFGRLSPVSE), 111 to 120 (MFGRLCPVSE), 121 to 130 (MFGRLCPVSE), and 131 to 140 (MFGRLCPVIT). The interval 1-140 (MFARLCPVSE…MFGRLCPVIT (140 aa)) is 14 X 10 AA tandem repeats of [MT]-F-[AG]-R-L-[CS]-P-V-[SI]-[ET].

This is an uncharacterized protein from Homo sapiens (Human).